We begin with the raw amino-acid sequence, 315 residues long: Putative ankyrin repeat protein R600 (315 aa).

ANK repeat units follow at residues 79 to 108, 118 to 152, 153 to 182, 184 to 211, and 212 to 240; these read NECRYFRMAVYNNSYDIAKYLLENGANVHV, SGFGKFYVFHSEKKEKRDTVELVKLLIDYNAMVGT, DTCNLVHTAIDANRLDVVKILVENGADIFS, QSKLLKSAVMYNYDILEYLISQGIDVTD, and DNNSVLKFAVSRGYDCVDLLLDAGADMNT.

This Acanthamoeba polyphaga mimivirus (APMV) protein is Putative ankyrin repeat protein R600.